The sequence spans 347 residues: Indole-3-glycerol phosphate lyase, chloroplastic (347 aa).

Disordered stretches follow at residues 1–38 (MAFA…TPRR) and 64–89 (APPQ…RSRP). The N-terminal 53 residues, 1–53 (MAFAPKTSSSSSLSSALQAAQSPPLLLRRMSSTATPRRRYDAAVVVTTTTTAR), are a transit peptide targeting the chloroplast. Over residues 8-27 (SSSSSLSSALQAAQSPPLLL) the composition is skewed to low complexity. The segment covering 64–76 (APPQAPAPAPVPP) has biased composition (pro residues).

The protein belongs to the TrpA family. In terms of assembly, tetramer of two alpha and two beta chains for the tryptophan synthase activity. Homodimer of alpha chains for the indole-3-glycerol phosphate lyase activity.

It localises to the plastid. The protein localises to the chloroplast. The catalysed reaction is (1S,2R)-1-C-(indol-3-yl)glycerol 3-phosphate = indole + D-glyceraldehyde 3-phosphate. The enzyme catalyses (1S,2R)-1-C-(indol-3-yl)glycerol 3-phosphate + L-serine = D-glyceraldehyde 3-phosphate + L-tryptophan + H2O. It participates in secondary metabolite biosynthesis; 2,4-dihydroxy-1,4-benzoxazin-3-one biosynthesis; 2,4-dihydroxy-1,4-benzoxazin-3-one from indoleglycerol phosphate: step 1/5. It functions in the pathway amino-acid biosynthesis; L-tryptophan biosynthesis; L-tryptophan from chorismate: step 5/5. Its function is as follows. The alpha subunit is responsible for the aldol cleavage of indoleglycerol phosphate to indole and glyceraldehyde 3-phosphate. In bacteria, tryptophan synthase alpha (TSA) activity is almost completely dependent on formation of an active alpha2beta2 complex with tryptophan synthase beta (TSB), and indole is usually not released during tryptophan synthesis. In maize, the TSA homolog BX1 catalyzes the formation of free indole from indole-3-glycerol phosphate, independently of TSB. This Zea mays (Maize) protein is Indole-3-glycerol phosphate lyase, chloroplastic (BX1).